Consider the following 389-residue polypeptide: Cytochrome b (389 aa).

The next 4 membrane-spanning stretches (helical) occupy residues 32 to 52, 76 to 98, 113 to 133, and 179 to 199; these read FGSLLATVLGIQILSGIFLAM, WLIRYMHATGASFFFAFLYLHIA, TWTIGTAIFFLTILTAFLGYT, and FFSLHYLLPFIISALAIMHMI. Heme b contacts are provided by His82 and His96. Heme b is bound by residues His183 and His197. His202 lines the a ubiquinone pocket. 4 helical membrane-spanning segments follow: residues 225 to 245, 289 to 309, 321 to 341, and 348 to 368; these read YLIKDLVTIFLFFIIFSIIIF, LFGVIAMFFAIFILFFLPLLD, IGKLLFWCFISNFILLMFIGA, and YVAIGTYATLFYFAYFVFFIP.

The protein belongs to the cytochrome b family. Fungal cytochrome b-c1 complex contains 10 subunits; 3 respiratory subunits, 2 core proteins and 5 low-molecular weight proteins. Cytochrome b-c1 complex is a homodimer. Heme b serves as cofactor.

It is found in the mitochondrion inner membrane. Its function is as follows. Component of the ubiquinol-cytochrome c reductase complex (complex III or cytochrome b-c1 complex) that is part of the mitochondrial respiratory chain. The b-c1 complex mediates electron transfer from ubiquinol to cytochrome c. Contributes to the generation of a proton gradient across the mitochondrial membrane that is then used for ATP synthesis. This is Cytochrome b (cob) from Schizosaccharomyces japonicus (Fission yeast).